A 331-amino-acid polypeptide reads, in one-letter code: Ornithine carbamoyltransferase (331 aa).

Residues 55–58 (STRT), Q82, R106, and 133–136 (HPTQ) each bind carbamoyl phosphate. Residues N166, D230, and 234–235 (SM) contribute to the L-ornithine site. Carbamoyl phosphate-binding positions include 272 to 273 (CL) and R317.

It belongs to the aspartate/ornithine carbamoyltransferase superfamily. OTCase family.

It localises to the cytoplasm. The catalysed reaction is carbamoyl phosphate + L-ornithine = L-citrulline + phosphate + H(+). Its pathway is amino-acid biosynthesis; L-arginine biosynthesis; L-arginine from L-ornithine and carbamoyl phosphate: step 1/3. Reversibly catalyzes the transfer of the carbamoyl group from carbamoyl phosphate (CP) to the N(epsilon) atom of ornithine (ORN) to produce L-citrulline. The protein is Ornithine carbamoyltransferase (argF) of Neisseria meningitidis serogroup A / serotype 4A (strain DSM 15465 / Z2491).